Here is a 548-residue protein sequence, read N- to C-terminus: Probable malate:quinone oxidoreductase (548 aa).

The interval 522 to 548 is disordered; the sequence is KPQAADSTPKAQLKPQPARKEVADIAL. The segment covering 539 to 548 has biased composition (basic and acidic residues); the sequence is ARKEVADIAL.

It belongs to the MQO family. FAD is required as a cofactor.

The catalysed reaction is (S)-malate + a quinone = a quinol + oxaloacetate. It functions in the pathway carbohydrate metabolism; tricarboxylic acid cycle; oxaloacetate from (S)-malate (quinone route): step 1/1. The chain is Probable malate:quinone oxidoreductase from Escherichia fergusonii (strain ATCC 35469 / DSM 13698 / CCUG 18766 / IAM 14443 / JCM 21226 / LMG 7866 / NBRC 102419 / NCTC 12128 / CDC 0568-73).